The following is a 442-amino-acid chain: MDDDDFGGFEAAETFDGEQGGNQAVSPAVPWATFPAVSGVRLSPASPELILDHDHSSPSTGHLPPDAVISSADDTHADSSLMSQTISKAQIQQSAHTHLNIPLFPLGLTDEPSHGALALEDEPEGPGVHVSNSQLRQKISSLETKLKASEEEKQRIKKDVESLMEKHSVLEKGFLKEKEQDAVSFQARYRELQEKHKQELEDMRKAGHEALSIIVDEYKALLQSSVKQQLDAIEKQYVSAIEKQAHRCEELLHAQHQRLLDVLDTEKELLREKIQEALTQQSQEQKESLEKCLQEEMQRNKETLESAVKLEKEAMKDVITKAVGEERENLEKVHAEERELWKTEHARDQERVAEAIQAAVQEQQRMSQEAVKAAIVEEQRRSEKAMEEAVKRTRDELVEYVREQRRLDQVTRQRSLSSLELFLSCAQKQLSALIATEPVDIE.

The tract at residues 1–16 is GGA1-binding motif; it reads MDDDDFGGFEAAETFD. The segment at 1-27 is disordered; sequence MDDDDFGGFEAAETFDGEQGGNQAVSP. Residues serine 43 and serine 46 each carry the phosphoserine modification. Disordered regions lie at residues 48 to 80 and 114 to 134; these read ELILDHDHSSPSTGHLPPDAVISSADDTHADSS and HGALALEDEPEGPGVHVSNSQ. Coiled coils occupy residues 130-210, 253-318, and 346-408; these read VSNS…GHEA, HAQH…MKDV, and ARDQ…RRLD. The tract at residues 211–414 is homodimerization; sequence LSIIVDEYKA…RRLDQVTRQR (204 aa).

Homodimer. Interacts with GGA1, GGA2 and AP1G1.

It is found in the membrane. It localises to the golgi apparatus. The protein localises to the trans-Golgi network membrane. Its subcellular location is the trans-Golgi network. In terms of biological role, involved in the regulation of membrane traffic through the trans-Golgi network (TGN). Functions in close cooperation with the GGAs in the sorting of hydrolases to lysosomes. The chain is Coiled-coil domain-containing protein 91 (Ccdc91) from Mus musculus (Mouse).